Reading from the N-terminus, the 97-residue chain is Co-chaperonin GroES (97 aa).

The protein belongs to the GroES chaperonin family. As to quaternary structure, heptamer of 7 subunits arranged in a ring. Interacts with the chaperonin GroEL.

It localises to the cytoplasm. Its function is as follows. Together with the chaperonin GroEL, plays an essential role in assisting protein folding. The GroEL-GroES system forms a nano-cage that allows encapsulation of the non-native substrate proteins and provides a physical environment optimized to promote and accelerate protein folding. GroES binds to the apical surface of the GroEL ring, thereby capping the opening of the GroEL channel. The protein is Co-chaperonin GroES of Erwinia tasmaniensis (strain DSM 17950 / CFBP 7177 / CIP 109463 / NCPPB 4357 / Et1/99).